The sequence spans 469 residues: D-3-phosphoglycerate dehydrogenase 1 (469 aa).

Phosphoserine is present on residues Ser-22, Ser-29, and Ser-33. NAD(+) is bound by residues 208 to 209 (HI), Asp-228, 285 to 287 (ASR), and Asp-311. Arg-287 is a catalytic residue. Glu-316 is a catalytic residue. The active-site Proton donor is the His-347. 347–350 (HIGG) is an NAD(+) binding site. Residues 399–469 (RVLYIHQNVP…SAKISIRLLY (71 aa)) enclose the ACT domain.

The protein belongs to the D-isomer specific 2-hydroxyacid dehydrogenase family.

It catalyses the reaction (2R)-3-phosphoglycerate + NAD(+) = 3-phosphooxypyruvate + NADH + H(+). The enzyme catalyses (R)-2-hydroxyglutarate + NAD(+) = 2-oxoglutarate + NADH + H(+). The protein operates within amino-acid biosynthesis; L-serine biosynthesis; L-serine from 3-phospho-D-glycerate: step 1/3. Its function is as follows. Catalyzes the reversible oxidation of 3-phospho-D-glycerate to 3-phosphonooxypyruvate, the first step of the phosphorylated L-serine biosynthesis pathway. Also catalyzes the reversible oxidation of 2-hydroxyglutarate to 2-oxoglutarate. The polypeptide is D-3-phosphoglycerate dehydrogenase 1 (SER3) (Saccharomyces cerevisiae (strain ATCC 204508 / S288c) (Baker's yeast)).